The sequence spans 90 residues: Small ribosomal subunit protein bS16 (90 aa).

This sequence belongs to the bacterial ribosomal protein bS16 family.

This Streptococcus agalactiae serotype III (strain NEM316) protein is Small ribosomal subunit protein bS16.